The chain runs to 52 residues: Nuclear respiratory factor 1 (52 aa).

The protein belongs to the NRF1/Ewg family. In terms of assembly, homodimer. Binds DNA as a dimer. Interacts with PPRC1. Post-translationally, phosphorylation enhances DNA binding. In terms of tissue distribution, expressed at high levels in the lung and testis, at intermediate levels in the kidney, heart and brain and at low levels in the muscle and liver.

Its subcellular location is the nucleus. Transcription factor that activates the expression of the EIF2S1 (EIF2-alpha) gene. Links the transcriptional modulation of key metabolic genes to cellular growth and development. Implicated in the control of nuclear genes required for respiration, heme biosynthesis, and mitochondrial DNA transcription and replication. The chain is Nuclear respiratory factor 1 (Nrf1) from Rattus norvegicus (Rat).